We begin with the raw amino-acid sequence, 481 residues long: Alkaline protease secretion protein AprF (481 aa).

Positions 462-481 are disordered; it reads PAPLHTLSKTDTEENRSALN. Basic and acidic residues predominate over residues 469 to 481; the sequence is SKTDTEENRSALN.

The protein belongs to the outer membrane factor (OMF) (TC 1.B.17) family.

It localises to the cell outer membrane. Functionally, involved in the secretion of alkaline protease. The polypeptide is Alkaline protease secretion protein AprF (aprF) (Pseudomonas aeruginosa (strain ATCC 15692 / DSM 22644 / CIP 104116 / JCM 14847 / LMG 12228 / 1C / PRS 101 / PAO1)).